A 554-amino-acid polypeptide reads, in one-letter code: Glucose-6-phosphate isomerase (554 aa).

Residue Glu359 is the Proton donor of the active site. Catalysis depends on residues His390 and Lys518.

The protein belongs to the GPI family.

Its subcellular location is the cytoplasm. It catalyses the reaction alpha-D-glucose 6-phosphate = beta-D-fructose 6-phosphate. Its pathway is carbohydrate biosynthesis; gluconeogenesis. The protein operates within carbohydrate degradation; glycolysis; D-glyceraldehyde 3-phosphate and glycerone phosphate from D-glucose: step 2/4. In terms of biological role, catalyzes the reversible isomerization of glucose-6-phosphate to fructose-6-phosphate. The polypeptide is Glucose-6-phosphate isomerase (Stutzerimonas stutzeri (strain A1501) (Pseudomonas stutzeri)).